The primary structure comprises 787 residues: Patatin-like phospholipase domain-containing protein OOU_Y34scaffold00095g16.3 (787 aa).

Disordered stretches follow at residues 47–69 (APDT…ARSF) and 137–164 (KVVG…PGRR). Residues 59–69 (ASPRSPSARSF) are compositionally biased toward low complexity. Positions 144-157 (HRQKKSSRRRKRSK) are enriched in basic residues. A helical transmembrane segment spans residues 180-200 (WPFLLIVGAWIVGLAVTYLFT). In terms of domain architecture, PNPLA spans 375–566 (LCLSGGASFA…RTDIPIRALN (192 aa)). The GXSXG motif lies at 406 to 410 (GTSGG). Ser408 (nucleophile) is an active-site residue. The Proton acceptor role is filled by Asp553. A disordered region spans residues 745–787 (GTDEEITTNDEMEFASDEKAVLTEDEGQFDGVTDNTEGSPLLK). Acidic residues predominate over residues 746–759 (TDEEITTNDEMEFA). A compositionally biased stretch (polar residues) spans 777–787 (TDNTEGSPLLK).

Belongs to the PLPL family.

Its subcellular location is the membrane. In terms of biological role, probable lipid hydrolase. The protein is Patatin-like phospholipase domain-containing protein OOU_Y34scaffold00095g16.3 of Pyricularia oryzae (strain Y34) (Rice blast fungus).